Reading from the N-terminus, the 30-residue chain is Agglutinin alpha-1 chain (30 aa).

In terms of domain architecture, Jacalin-type lectin spans 1-30; it reads GVAFDDGSYTGIREINFEYNRETAIGGXQV.

It belongs to the jacalin lectin family. Tetramer of four alpha chains associated with two or four beta chains.

N-acetyl-galactosamine and D-galactose specific lectin. Binds the Tn-antigen structure GalNAc-alpha-1-O-Ser, the T-antigen structure Gal-beta1-3-GalNAc and IgA. This is Agglutinin alpha-1 chain from Morus nigra (Black mulberry).